Consider the following 206-residue polypeptide: MARYLGPKLKLSRREGTDLFLKSGVRAIESKCKIDTAPGQHGARKPRLSDYGSQLREKQKVRRIYGILERQFRNYYKEANRLKGNTGENLLVLLEGRLDNVVYRMGFAATRAEARQLVSHKSIVVNGRVVNIPSYQVSVDDVIAVREKSKKQARIKASLELATQREKPTWLEVDATKMEGVFKRTPERSDLSADINEHLIVELYSK.

One can recognise an S4 RNA-binding domain in the interval 96-156 (GRLDNVVYRM…EKSKKQARIK (61 aa)).

Belongs to the universal ribosomal protein uS4 family. In terms of assembly, part of the 30S ribosomal subunit. Contacts protein S5. The interaction surface between S4 and S5 is involved in control of translational fidelity.

Functionally, one of the primary rRNA binding proteins, it binds directly to 16S rRNA where it nucleates assembly of the body of the 30S subunit. Its function is as follows. With S5 and S12 plays an important role in translational accuracy. In Glaesserella parasuis serovar 5 (strain SH0165) (Haemophilus parasuis), this protein is Small ribosomal subunit protein uS4.